Here is a 350-residue protein sequence, read N- to C-terminus: Biotin synthase (350 aa).

Residues 38–256 (NHVQVSTLLS…IAVARIMMPE (219 aa)) enclose the Radical SAM core domain. [4Fe-4S] cluster is bound by residues Cys53, Cys57, and Cys60. Positions 97, 128, 188, and 260 each coordinate [2Fe-2S] cluster.

This sequence belongs to the radical SAM superfamily. Biotin synthase family. As to quaternary structure, homodimer. Requires [4Fe-4S] cluster as cofactor. The cofactor is [2Fe-2S] cluster.

The enzyme catalyses (4R,5S)-dethiobiotin + (sulfur carrier)-SH + 2 reduced [2Fe-2S]-[ferredoxin] + 2 S-adenosyl-L-methionine = (sulfur carrier)-H + biotin + 2 5'-deoxyadenosine + 2 L-methionine + 2 oxidized [2Fe-2S]-[ferredoxin]. The protein operates within cofactor biosynthesis; biotin biosynthesis; biotin from 7,8-diaminononanoate: step 2/2. Functionally, catalyzes the conversion of dethiobiotin (DTB) to biotin by the insertion of a sulfur atom into dethiobiotin via a radical-based mechanism. This Aliivibrio fischeri (strain ATCC 700601 / ES114) (Vibrio fischeri) protein is Biotin synthase.